The primary structure comprises 1210 residues: Homeodomain-interacting protein kinase 1 (1210 aa).

Residue K25 forms a Glycyl lysine isopeptide (Lys-Gly) (interchain with G-Cter in SUMO); alternate linkage. A Glycyl lysine isopeptide (Lys-Gly) (interchain with G-Cter in SUMO2); alternate cross-link involves residue K25. Glycyl lysine isopeptide (Lys-Gly) (interchain with G-Cter in SUMO2) cross-links involve residues K120 and K124. The 329-residue stretch at 190–518 folds into the Protein kinase domain; the sequence is YEVLEFLGRG…PLKTLNHQFV (329 aa). ATP contacts are provided by residues 196–204 and K219; that span reads LGRGTFGQV. Residue D315 is the Proton acceptor of the active site. Positions 835–856 are disordered; the sequence is QQQSSSLPSKKNKQSAPVSSKS. Positions 844–847 match the Nuclear localization signal 1 (NLS1) motif; the sequence is KKNK. Residue S872 is modified to Phosphoserine. Residues 885-1093 form an interaction with TP53 region; that stretch reads PVQDQHQPII…FQHGSPLHST (209 aa). The segment at 891-998 is required for localization to nuclear speckles; that stretch reads QPIIIPDTPS…PLKTQLGDCT (108 aa). Residues 902–926 are SUMO interaction motifs (SIM); required for nuclear localization and kinase activity; the sequence is PVSVITIRSDTDEEEDNKYKPNSSS. Residues 938-981 form a disordered region; it reads TVNDSPDSDSSLSSPHPTDTLSALRGNSGTLLEGPGRPAADGIG. Over residues 941–959 the composition is skewed to low complexity; sequence DSPDSDSSLSSPHPTDTLS. K991 is covalently cross-linked (Glycyl lysine isopeptide (Lys-Gly) (interchain with G-Cter in SUMO2)). Disordered regions lie at residues 1046-1069 and 1084-1104; these read LSQN…APRR and FQHG…APAH. Low complexity-rich tracts occupy residues 1047-1063 and 1095-1104; these read SQNQ…ERSS and HPHLAPAPAH. S1200 carries the post-translational modification Phosphoserine. A Glycyl lysine isopeptide (Lys-Gly) (interchain with G-Cter in SUMO) cross-link involves residue K1203.

It belongs to the protein kinase superfamily. CMGC Ser/Thr protein kinase family. HIPK subfamily. In terms of assembly, interacts with Nkx1-2, Nkx2-5, MYB, PARK7, DAXX and p53/TP53. Part of a cytoplasmic complex made of HIPK1, DAB2IP and MAP3K5 in response to TNF. This complex formation promotes MAP3K5-JNK activation and subsequent apoptosis. In terms of processing, phosphorylated and activated by JNK1. Autophosphorylated. Post-translationally, sumoylated. When conjugated it is directed to nuclear speckles. SENP1-mediated desumoylation is mediated by TNF in response to stress stimuli, triggering transient translocation from nucleus to cytoplasm. Ubiquitously expressed, with high levels in reproductive tissues. Expressed in the epithelial layer of mammary gland, uterus and epididymis, in the corpus luteum, and in post-meiotic round spermatids.

Its subcellular location is the nucleus. It is found in the cytoplasm. It localises to the nucleus speckle. The enzyme catalyses L-seryl-[protein] + ATP = O-phospho-L-seryl-[protein] + ADP + H(+). The catalysed reaction is L-threonyl-[protein] + ATP = O-phospho-L-threonyl-[protein] + ADP + H(+). Functionally, serine/threonine-protein kinase involved in transcription regulation and TNF-mediated cellular apoptosis. Plays a role as a corepressor for homeodomain transcription factors. Phosphorylates DAXX and MYB. Phosphorylates DAXX in response to stress, and mediates its translocation from the nucleus to the cytoplasm. Inactivates MYB transcription factor activity by phosphorylation. Prevents MAP3K5-JNK activation in the absence of TNF. TNF triggers its translocation to the cytoplasm in response to stress stimuli, thus activating nuclear MAP3K5-JNK by derepression and promoting apoptosis. May be involved in anti-oxidative stress responses. Involved in the regulation of eye size, lens formation and retinal lamination during late embryogenesis. Promotes angiogenesis and to be involved in erythroid differentiation. May be involved in malignant squamous cell tumor formation. Phosphorylates PAGE4 at 'Thr-51' which is critical for the ability of PAGE4 to potentiate the transcriptional activator activity of JUN. The chain is Homeodomain-interacting protein kinase 1 (Hipk1) from Mus musculus (Mouse).